The chain runs to 377 residues: Cytochrome b (377 aa).

The next 4 membrane-spanning stretches (helical) occupy residues 33–53 (FGSLLGLCLITQIMTGLFLAM), 77–98 (WLIRIIHANGASLFFICLYLHT), 113–133 (WTMGVILMFLVMGTAFMGYVL), and 178–198 (FFMIHFLLPFLIIGGLLVHLL). H83 and H97 together coordinate heme b. Positions 182 and 196 each coordinate heme b. H201 contributes to the a ubiquinone binding site. The next 4 helical transmembrane spans lie at 226 to 246 (YKDLVGVLIIMSGLLLLSLLS), 288 to 308 (LGGVIALVLSVSILFILPLSS), 320 to 340 (FNQIMFWVFINLVIMLTWIGA), and 347 to 367 (FIIMGQTLTCSYFMYFILNPM).

This sequence belongs to the cytochrome b family. The main subunits of complex b-c1 are: cytochrome b, cytochrome c1 and the Rieske protein. Requires heme b as cofactor.

It localises to the mitochondrion inner membrane. Functionally, component of the ubiquinol-cytochrome c reductase complex (complex III or cytochrome b-c1 complex) that is part of the mitochondrial respiratory chain. The b-c1 complex mediates electron transfer from ubiquinol to cytochrome c. Contributes to the generation of a proton gradient across the mitochondrial membrane that is then used for ATP synthesis. This chain is Cytochrome b (MT-CYB), found in Tetrodontophora bielanensis (Giant springtail).